A 355-amino-acid polypeptide reads, in one-letter code: uncharacterized protein (355 aa).

Residues 9-75 form the J domain; sequence DYYDILNISV…KLREKYDKLG (67 aa).

It belongs to the DnaJ family.

It localises to the cytoplasm. This is an uncharacterized protein from Schizosaccharomyces pombe (strain 972 / ATCC 24843) (Fission yeast).